The sequence spans 541 residues: Serine/threonine-protein kinase akt-1 (541 aa).

One can recognise a PH domain in the interval 15–118 (DVVIEGWLHK…WIHAIESISK (104 aa)). In terms of domain architecture, Protein kinase spans 193 to 450 (FDFLKVLGKG…ALEICRADFF (258 aa)). ATP-binding positions include 199–207 (LGKGTFGKV) and Lys222. The active-site Proton acceptor is the Asp316. A Phosphothreonine modification is found at Thr350. Residues 451 to 528 (RTVDWEATYR…HNVMGSINRI (78 aa)) form the AGC-kinase C-terminal domain. Ser517 bears the Phosphoserine mark.

It belongs to the protein kinase superfamily. AGC Ser/Thr protein kinase family. RAC subfamily. As to quaternary structure, interacts with pdk-1, sgk-1, akt-2 and daf-16. Part of a complex containing sgk-1, akt-1 and akt-2. Interacts with cmd-1 in the presence of Ca(2+). Interacts with let-92 phosphatase regulatory subunit pptr-1. The cofactor is Mg(2+). In terms of tissue distribution, expressed in neurons, muscle cells of the pharynx, rectal gland cells, vulva and spermatheca.

It catalyses the reaction L-seryl-[protein] + ATP = O-phospho-L-seryl-[protein] + ADP + H(+). It carries out the reaction L-threonyl-[protein] + ATP = O-phospho-L-threonyl-[protein] + ADP + H(+). Phosphorylated and activated by pdk-1. Its function is as follows. Acts downstream of PI3 kinase age-1 and kinase pdk-1 in the daf-2/insulin receptor-like transduction pathway. Phosphorylates Forkhead-related daf-16 and the longevity-promoting skn-1 transcription factors, which inhibits their entry into the nucleus and antagonizes their functions. Plays a role in maintaining the gonadal basement membrane through it's role in inhibiting daf-16 activity. Has an essential role in regulating developmental arrest at the dauer stage. Plays a role in immune function and pathogen resistance. Regulates salt chemotaxis learning. Downstream of age-1 and together with akt-2 and sgk-1, promotes cell survival during embryonic development. The protein is Serine/threonine-protein kinase akt-1 of Caenorhabditis elegans.